Consider the following 639-residue polypeptide: Threonine--tRNA ligase (639 aa).

One can recognise a TGS domain in the interval 1–61 (MIHITLPDGS…TQDSPLSIVT (61 aa)). The interval 242 to 533 (DHRKLGRELD…LIEEHAGALP (292 aa)) is catalytic. Residues cysteine 333, histidine 384, and histidine 510 each contribute to the Zn(2+) site.

It belongs to the class-II aminoacyl-tRNA synthetase family. As to quaternary structure, homodimer. Zn(2+) serves as cofactor.

The protein localises to the cytoplasm. The catalysed reaction is tRNA(Thr) + L-threonine + ATP = L-threonyl-tRNA(Thr) + AMP + diphosphate + H(+). In terms of biological role, catalyzes the attachment of threonine to tRNA(Thr) in a two-step reaction: L-threonine is first activated by ATP to form Thr-AMP and then transferred to the acceptor end of tRNA(Thr). Also edits incorrectly charged L-seryl-tRNA(Thr). This chain is Threonine--tRNA ligase, found in Acidovorax sp. (strain JS42).